Consider the following 31-residue polypeptide: Bacteriocin lactocin-705 (31 aa).

Its function is as follows. Antibacterial activity against several lactic acid bacteria, Listeria, Streptococci, etc. This is Bacteriocin lactocin-705 from Lacticaseibacillus paracasei (Lactobacillus paracasei).